Here is a 405-residue protein sequence, read N- to C-terminus: Putative arsenical pump-driving ATPase (405 aa).

8–15 contacts ATP; the sequence is GKGGVGKT.

The protein belongs to the arsA ATPase family.

The enzyme catalyses arsenite(in) + ATP + H2O = arsenite(out) + ADP + phosphate + H(+). In terms of biological role, anion-transporting ATPase. Catalyzes the extrusion of arsenite. The sequence is that of Putative arsenical pump-driving ATPase from Prosthecochloris vibrioformis (Chlorobium vibrioforme).